The primary structure comprises 259 residues: Phosphate import ATP-binding protein PstB (259 aa).

One can recognise an ABC transporter domain in the interval 10–254; that stretch reads AESRNLSFYY…PSRKETEDYI (245 aa). Residue 43-50 participates in ATP binding; the sequence is GPSGCGKS.

It belongs to the ABC transporter superfamily. Phosphate importer (TC 3.A.1.7) family. The complex is composed of two ATP-binding proteins (PstB), two transmembrane proteins (PstC and PstA) and a solute-binding protein (PstS).

Its subcellular location is the cell inner membrane. It carries out the reaction phosphate(out) + ATP + H2O = ADP + 2 phosphate(in) + H(+). Functionally, part of the ABC transporter complex PstSACB involved in phosphate import. Responsible for energy coupling to the transport system. This is Phosphate import ATP-binding protein PstB from Methylobacillus flagellatus (strain ATCC 51484 / DSM 6875 / VKM B-1610 / KT).